Consider the following 1403-residue polypeptide: Baculoviral IAP repeat-containing protein 1e (1403 aa).

BIR repeat units lie at residues 60–127 (EAKR…CEFL), 159–227 (EEAR…CEFL), and 278–345 (EELR…CVFL). Zn(2+) contacts are provided by Cys-315, Cys-318, His-335, and Cys-342. The 296-residue stretch at 464–759 (SVMCVEGETG…EFLAAVRLTE (296 aa)) folds into the NACHT domain. 473–478 (GSGKTT) provides a ligand contact to ATP.

In terms of assembly, component of the NLRC4 inflammasome, at least composed of NLRC4, caspase-1 (CASP1) and some NAIP protein. Flagellin binding by NAIP5 triggers assembly of the inflammasome, a huge complex that contains a single NAIP5 chain and multiple copies of NLRC4. As to quaternary structure, (Microbial infection) Interacts with S.typhimurium (Salmonella) flagellin. (Microbial infection) Interacts with L.pneumophila flagellin. Detected in macrophages (at protein level).

Sensor component of the NLRC4 inflammasome that specifically recognizes and binds flagellin from pathogenic bacteria such as Legionella or Salmonella. Association of pathogenic bacteria proteins drives in turn drive assembly and activation of the NLRC4 inflammasome, promoting caspase-1 activation, cytokine production and macrophage pyroptosis. The NLRC4 inflammasome is activated as part of the innate immune response to a range of intracellular bacteria. The NLRC4 inflammasome senses Gram-negative bacteria such as L.pneumophila and P.aeruginosa, enteric pathogens S.typhimurium (Salmonella) and S.flexneri. May contribute to prevent motor-neuron apoptosis induced by a variety of signals. In Mus musculus (Mouse), this protein is Baculoviral IAP repeat-containing protein 1e.